Consider the following 411-residue polypeptide: Lissencephaly-1 homolog (411 aa).

A LisH domain is found at 9–41 (QREELNQAIADYLGSNGYADSLETFRKEADLST). A coiled-coil region spans residues 56–83 (TSVIRLQKKVMDLEAKLTEAEKEVIEGA). 7 WD repeats span residues 106–147 (GHRA…RSLK), 148–187 (GHTD…ECVK), 191–230 (GHDH…CVKT), 233–272 (GHRE…CKVE), 275–334 (DHEH…CLLT), 337–376 (GHDN…CMKT), and 379–411 (AHQH…WECR).

Belongs to the WD repeat LIS1/nudF family.

The protein localises to the cytoplasm. Its subcellular location is the cytoskeleton. The protein resides in the microtubule organizing center. It is found in the centrosome. Its function is as follows. Positively regulates the activity of the minus-end directed microtubule motor protein dynein. May enhance dynein-mediated microtubule sliding by targeting dynein to the microtubule plus end. Required for several dynein- and microtubule-dependent processes. This chain is Lissencephaly-1 homolog, found in Drosophila mojavensis (Fruit fly).